A 216-amino-acid polypeptide reads, in one-letter code: Outer-membrane lipoprotein LolB (216 aa).

The N-terminal stretch at 1–21 (MLIFKICFYRLLPLSVLLLAA) is a signal peptide. A lipid anchor (N-palmitoyl cysteine) is attached at Cys-22. Cys-22 carries S-diacylglycerol cysteine lipidation.

Belongs to the LolB family. In terms of assembly, monomer.

It is found in the cell outer membrane. In terms of biological role, plays a critical role in the incorporation of lipoproteins in the outer membrane after they are released by the LolA protein. The sequence is that of Outer-membrane lipoprotein LolB from Hamiltonella defensa subsp. Acyrthosiphon pisum (strain 5AT).